We begin with the raw amino-acid sequence, 56 residues long: Large ribosomal subunit protein bL32 (56 aa).

The protein belongs to the bacterial ribosomal protein bL32 family.

This Bacillus cereus (strain ATCC 14579 / DSM 31 / CCUG 7414 / JCM 2152 / NBRC 15305 / NCIMB 9373 / NCTC 2599 / NRRL B-3711) protein is Large ribosomal subunit protein bL32.